A 435-amino-acid polypeptide reads, in one-letter code: Solute carrier family 38 member 8 (435 aa).

11 helical membrane passes run 29 to 49 (AVFILMKSALGAGLLNFPWAF), 55 to 75 (VVPAFLVELVSLVFLISGLVI), 100 to 120 (IGKLCEACFLLNLLMISVAFL), 151 to 171 (FTLPLLSVLVILPLSAPREIA), 178 to 198 (ILGTLAACYLALVITVQYYLW), 218 to 240 (VFSVFPTICFGFQCHEAAVSIYC), 250 to 270 (WALVSVLSLLACCLIYSLTGV), 295 to 315 (IIVARVLFAVSIVTVYPIVLF), 348 to 368 (MPLTILWVTVTLAMALFMPDL), 374 to 394 (IIGGISSFFIFIFPGLCLICA), and 410 to 430 (VWGVVSVLVGTFIFGQSTAAA).

The protein belongs to the amino acid/polyamine transporter 2 family. As to expression, expressed in fetal and adult brain, and spinal cord. In the brain, it is localized in the cell body and axon of the majority of neuronal cells and in a subset of glial cells. Found throughout the neuronal retina, with higher expression levels in the inner and outer plexiform layers and the photoreceptor layer. Very weak expression is also present in the kidneys, thymus, and testes.

Its subcellular location is the membrane. It is found in the cytoplasm. The protein resides in the cell cortex. The protein localises to the cell projection. It localises to the axon. The enzyme catalyses L-glutamine(out) = L-glutamine(in). The catalysed reaction is L-alanine(in) = L-alanine(out). It catalyses the reaction L-histidine(out) = L-histidine(in). It carries out the reaction L-aspartate(out) = L-aspartate(in). The enzyme catalyses L-arginine(in) = L-arginine(out). The catalysed reaction is L-leucine(in) = L-leucine(out). Its function is as follows. Electrogenic sodium-dependent amino acid transporter with a preference for L-glutamine, L-alanine, L-histidine, L-aspartate and L-arginine. May facilitate glutamine uptake in both excitatory and inhibitory neurons. The transport mechanism and stoichiometry remain to be elucidated. The sequence is that of Solute carrier family 38 member 8 from Homo sapiens (Human).